The sequence spans 176 residues: NADH:riboflavin 5'-phosphate oxidoreductase (176 aa).

Provides the reduced form of flavin mononucleotide for the PIIA synthase reaction. The polypeptide is NADH:riboflavin 5'-phosphate oxidoreductase (snaC) (Streptomyces pristinaespiralis).